The chain runs to 246 residues: Bis(5'-nucleosyl)-tetraphosphatase PrpE [asymmetrical] (246 aa).

The protein belongs to the PrpE family. Ni(2+) is required as a cofactor.

The enzyme catalyses P(1),P(4)-bis(5'-guanosyl) tetraphosphate + H2O = GMP + GTP + 2 H(+). In terms of biological role, asymmetrically hydrolyzes Ap4p to yield AMP and ATP. This Bacillus cereus (strain ZK / E33L) protein is Bis(5'-nucleosyl)-tetraphosphatase PrpE [asymmetrical].